Consider the following 1512-residue polypeptide: DNA polymerase (1512 aa).

The protein belongs to the DNA polymerase type-B family.

It is found in the host nucleus. The enzyme catalyses DNA(n) + a 2'-deoxyribonucleoside 5'-triphosphate = DNA(n+1) + diphosphate. In Ictalurid herpesvirus 1 (strain Auburn) (IcHV-1), this protein is DNA polymerase (57/58).